Consider the following 202-residue polypeptide: Glycerol-3-phosphate acyltransferase (202 aa).

Transmembrane regions (helical) follow at residues 3–23 (NLII…LILA), 61–81 (IATI…LKFL), 87–107 (LLWS…YLLF), 118–138 (GAMI…WVVI), 144–164 (ISSL…FIFN), and 167–187 (LEIH…YKHL).

This sequence belongs to the PlsY family. In terms of assembly, probably interacts with PlsX.

It localises to the cell inner membrane. The enzyme catalyses an acyl phosphate + sn-glycerol 3-phosphate = a 1-acyl-sn-glycero-3-phosphate + phosphate. It functions in the pathway lipid metabolism; phospholipid metabolism. Functionally, catalyzes the transfer of an acyl group from acyl-phosphate (acyl-PO(4)) to glycerol-3-phosphate (G3P) to form lysophosphatidic acid (LPA). This enzyme utilizes acyl-phosphate as fatty acyl donor, but not acyl-CoA or acyl-ACP. The protein is Glycerol-3-phosphate acyltransferase of Campylobacter jejuni subsp. jejuni serotype O:23/36 (strain 81-176).